Consider the following 362-residue polypeptide: S-adenosylmethionine decarboxylase proenzyme (362 aa).

Catalysis depends on residues E13 and E16. S73 functions as the Schiff-base intermediate with substrate; via pyruvic acid in the catalytic mechanism. S73 carries the pyruvic acid (Ser); by autocatalysis modification. The Proton donor; for catalytic activity role is filled by C87. Active-site proton acceptor; for processing activity residues include S236 and H249.

Belongs to the eukaryotic AdoMetDC family. The cofactor is pyruvate. Is synthesized initially as an inactive proenzyme. Formation of the active enzyme involves a self-maturation process in which the active site pyruvoyl group is generated from an internal serine residue via an autocatalytic post-translational modification. Two non-identical subunits are generated from the proenzyme in this reaction, and the pyruvate is formed at the N-terminus of the alpha chain, which is derived from the carboxyl end of the proenzyme. The post-translation cleavage follows an unusual pathway, termed non-hydrolytic serinolysis, in which the side chain hydroxyl group of the serine supplies its oxygen atom to form the C-terminus of the beta chain, while the remainder of the serine residue undergoes an oxidative deamination to produce ammonia and the pyruvoyl group blocking the N-terminus of the alpha chain.

It catalyses the reaction S-adenosyl-L-methionine + H(+) = S-adenosyl 3-(methylsulfanyl)propylamine + CO2. The protein operates within amine and polyamine biosynthesis; S-adenosylmethioninamine biosynthesis; S-adenosylmethioninamine from S-adenosyl-L-methionine: step 1/1. In Datura stramonium (Jimsonweed), this protein is S-adenosylmethionine decarboxylase proenzyme (SAMDC).